The primary structure comprises 360 residues: Bifunctional protein FolD 4, chloroplastic (360 aa).

The N-terminal 51 residues, 1 to 51, are a transit peptide targeting the chloroplast; it reads MASMMFTDCSSTTTSRLIHLNRSSGTFLLRQCVGQLRLQTTASGRGCCIRS. Serine 52 is modified (N-acetylserine).

This sequence belongs to the tetrahydrofolate dehydrogenase/cyclohydrolase family. In terms of assembly, homodimer.

The protein resides in the plastid. It is found in the chloroplast. It catalyses the reaction (6R)-5,10-methylene-5,6,7,8-tetrahydrofolate + NADP(+) = (6R)-5,10-methenyltetrahydrofolate + NADPH. It carries out the reaction (6R)-5,10-methenyltetrahydrofolate + H2O = (6R)-10-formyltetrahydrofolate + H(+). It functions in the pathway one-carbon metabolism; tetrahydrofolate interconversion. In terms of biological role, catalyzes the oxidation of 5,10-methylenetetrahydrofolate to 5,10-methenyltetrahydrofolate and then the hydrolysis of 5,10-methenyltetrahydrofolate to 10-formyltetrahydrofolate. This chain is Bifunctional protein FolD 4, chloroplastic (FOLD4), found in Arabidopsis thaliana (Mouse-ear cress).